Consider the following 25-residue polypeptide: Caerin-1.4 (25 aa).

Leu25 is modified (leucine amide).

Belongs to the frog skin active peptide (FSAP) family. Caerin subfamily. In terms of tissue distribution, expressed by the skin parotoid and/or rostral glands.

It is found in the secreted. Functionally, antibacterial peptide, that adopts an alpha helical conformation which can disrupt bacterial membranes. Each caerin displays a different antimicrobial specificity. The sequence is that of Caerin-1.4 from Ranoidea caerulea (Green tree frog).